Here is a 309-residue protein sequence, read N- to C-terminus: 2-dehydro-3-deoxygluconokinase (309 aa).

Residues G34 to N38, Y89, Y103 to R105, and R167 contribute to the substrate site. Residues N165–R167, S193, K219–A225, G248–D251, and N275 contribute to the ATP site. Substrate is bound at residue D251. The Proton acceptor role is filled by D251. D287 is a substrate binding site.

This sequence belongs to the carbohydrate kinase pfkB family. As to quaternary structure, homohexamer; trimer of dimers.

It carries out the reaction 2-dehydro-3-deoxy-D-gluconate + ATP = 2-dehydro-3-deoxy-6-phospho-D-gluconate + ADP + H(+). The protein operates within carbohydrate acid metabolism; 2-dehydro-3-deoxy-D-gluconate degradation; D-glyceraldehyde 3-phosphate and pyruvate from 2-dehydro-3-deoxy-D-gluconate: step 1/2. Involved in the degradation of glucose via the semi-phosphorylative Entner-Doudoroff pathway. Catalyzes the phosphorylation of 2-keto-3-deoxygluconate (KDG) to produce 2-keto-3-deoxy-6-phosphogluconate (KDPG). The sequence is that of 2-dehydro-3-deoxygluconokinase (kdgK) from Thermus thermophilus (strain ATCC 27634 / DSM 579 / HB8).